The chain runs to 66 residues: MGTLCSVCKRRPNPVDTEGKVINVTDDFEEMSETEIMLACPQDKKLCKKPKESMYKTKHKSNKHGI.

Gly2 carries N-myristoyl glycine; by host lipidation.

It belongs to the herpesviridae cytoplasmic envelopment protein 3 family. As to quaternary structure, interacts with cytoplasmic envelopment protein 2; this interaction is essential for the proper localization of each protein to the assembly complex and thus for the production of infectious virus. In terms of processing, phosphorylated. Phosphorylation does not seem to be required for recycling to the host Golgi apparatus. Packaging is selective for underphosphorylated forms.

The protein resides in the virion tegument. Its subcellular location is the virion membrane. The protein localises to the host cell membrane. It localises to the host Golgi apparatus membrane. In terms of biological role, plays an important role in the cytoplasmic envelopment of tegument proteins and capsids during the assembly and egress processes. Also participates in viral entry at the fusion step probably by regulating the core fusion machinery. The polypeptide is Cytoplasmic envelopment protein 3 (38) (Saimiriine herpesvirus 2 (strain 11) (SaHV-2)).